Here is a 297-residue protein sequence, read N- to C-terminus: HTH-type transcriptional regulator ArgP (297 aa).

The region spanning 4-60 is the HTH lysR-type domain; the sequence is PDYRTLQALDAVIRERGFERAAQKLCITQSAVSQRIKQLENMFGQPLLVRTVPPRPT. Positions 21–40 form a DNA-binding region, H-T-H motif; that stretch reads FERAAQKLCITQSAVSQRIK.

It belongs to the LysR transcriptional regulatory family. In terms of assembly, homodimer.

In terms of biological role, controls the transcription of genes involved in arginine and lysine metabolism. This chain is HTH-type transcriptional regulator ArgP, found in Salmonella typhi.